A 57-amino-acid chain; its full sequence is Small ribosomal subunit protein eS31 (57 aa).

Residues cysteine 29, cysteine 32, cysteine 47, and cysteine 50 each contribute to the Zn(2+) site. Residues 29–50 form a C4-type zinc finger; the sequence is CPRCGPGVFMANHKDRWSCGRC.

The protein belongs to the eukaryotic ribosomal protein eS31 family. In terms of assembly, part of the 30S ribosomal subunit. The cofactor is Zn(2+).

The protein is Small ribosomal subunit protein eS31 of Thermococcus kodakarensis (strain ATCC BAA-918 / JCM 12380 / KOD1) (Pyrococcus kodakaraensis (strain KOD1)).